Consider the following 302-residue polypeptide: FeMo cofactor biosynthesis protein NifB (302 aa).

The region spanning 22 to 264 (HDKYGRVHLP…PQFRACGQCR (243 aa)) is the Radical SAM core domain. Cys-36, Cys-40, and Cys-43 together coordinate [4Fe-4S] cluster. Gly-91, Thr-142, and Ile-194 together coordinate S-adenosyl-L-methionine. Cys-260 and Cys-263 together coordinate [4Fe-4S] cluster.

It belongs to the radical SAM superfamily. NifB family. As to quaternary structure, monomer. Requires [4Fe-4S] cluster as cofactor.

Its pathway is cofactor biosynthesis; Fe-Mo cofactor biosynthesis. Functionally, involved in the biosynthesis of the iron-molybdenum cofactor (FeMo-co or M-cluster) found in the dinitrogenase enzyme of the nitrogenase complex in nitrogen-fixing microorganisms. NifB catalyzes the crucial step of radical SAM-dependent carbide insertion that occurs concomitant with the insertion of a 9th sulfur and the rearrangement/coupling of two [4Fe-4S] clusters into a [8Fe-9S-C] cluster, the precursor to the M-cluster. This chain is FeMo cofactor biosynthesis protein NifB, found in Methanocaldococcus infernus (strain DSM 11812 / JCM 15783 / ME).